The primary structure comprises 911 residues: DNA mismatch repair protein MutS (911 aa).

Over residues methionine 1–aspartate 10 the composition is skewed to basic and acidic residues. The tract at residues methionine 1–glutamate 24 is disordered. An ATP-binding site is contributed by glycine 662–serine 669.

This sequence belongs to the DNA mismatch repair MutS family.

In terms of biological role, this protein is involved in the repair of mismatches in DNA. It is possible that it carries out the mismatch recognition step. This protein has a weak ATPase activity. The polypeptide is DNA mismatch repair protein MutS (Bartonella quintana (strain Toulouse) (Rochalimaea quintana)).